A 334-amino-acid chain; its full sequence is Ornithine carbamoyltransferase (334 aa).

Carbamoyl phosphate is bound by residues 57 to 60, Gln-84, Arg-108, and 135 to 138; these read STRT and HPTQ. L-ornithine-binding positions include Asn-169, Asp-233, and 237-238; that span reads SM. Carbamoyl phosphate contacts are provided by residues 275–276 and Arg-320; that span reads CL.

This sequence belongs to the aspartate/ornithine carbamoyltransferase superfamily. OTCase family. Homotrimer.

It is found in the cytoplasm. It catalyses the reaction carbamoyl phosphate + L-ornithine = L-citrulline + phosphate + H(+). Its pathway is amino-acid biosynthesis; L-arginine biosynthesis; L-arginine from L-ornithine and carbamoyl phosphate: step 1/3. Reversibly catalyzes the transfer of the carbamoyl group from carbamoyl phosphate (CP) to the N(epsilon) atom of ornithine (ORN) to produce L-citrulline. This is Ornithine carbamoyltransferase from Vibrio vulnificus (strain CMCP6).